The chain runs to 507 residues: Maturase K (507 aa).

It belongs to the intron maturase 2 family. MatK subfamily.

The protein resides in the plastid. The protein localises to the chloroplast. Usually encoded in the trnK tRNA gene intron. Probably assists in splicing its own and other chloroplast group II introns. The polypeptide is Maturase K (Nymphaea alba (White water-lily)).